The sequence spans 273 residues: NH(3)-dependent NAD(+) synthetase (273 aa).

47–54 provides a ligand contact to ATP; sequence GISGGQDS. Asp53 provides a ligand contact to Mg(2+). Arg139 contacts deamido-NAD(+). Thr159 is a binding site for ATP. Glu164 is a binding site for Mg(2+). Residues Lys172 and Asp179 each coordinate deamido-NAD(+). Residues Lys188 and Thr210 each coordinate ATP. A deamido-NAD(+)-binding site is contributed by 259 to 260; that stretch reads HK.

It belongs to the NAD synthetase family. As to quaternary structure, homodimer.

The enzyme catalyses deamido-NAD(+) + NH4(+) + ATP = AMP + diphosphate + NAD(+) + H(+). It participates in cofactor biosynthesis; NAD(+) biosynthesis; NAD(+) from deamido-NAD(+) (ammonia route): step 1/1. Functionally, catalyzes the ATP-dependent amidation of deamido-NAD to form NAD. Uses ammonia as a nitrogen source. The protein is NH(3)-dependent NAD(+) synthetase of Staphylococcus saprophyticus subsp. saprophyticus (strain ATCC 15305 / DSM 20229 / NCIMB 8711 / NCTC 7292 / S-41).